The chain runs to 878 residues: Glycogen [starch] synthase (878 aa).

Lys61 contacts UDP-alpha-D-glucose. Disordered regions lie at residues 637-721 (PPKP…NVIP) and 746-878 (NEFK…KSLK). 2 stretches are compositionally biased toward low complexity: residues 641-656 (ISRS…LKLS) and 666-676 (QQQQQQQQPQP). Positions 677 to 692 (IGTTINLIPPSSNVSV) are enriched in polar residues. Low complexity-rich tracts occupy residues 693 to 715 (TPTT…ITTP), 746 to 781 (NEFK…AAAT), 795 to 830 (PNTS…NGKP), and 838 to 878 (TKSN…KSLK).

It belongs to the glycosyltransferase 3 family.

The enzyme catalyses [(1-&gt;4)-alpha-D-glucosyl](n) + UDP-alpha-D-glucose = [(1-&gt;4)-alpha-D-glucosyl](n+1) + UDP + H(+). Its pathway is glycan biosynthesis; glycogen biosynthesis. In terms of biological role, catalyzes the formation of apha-1,4 glycosidic bonds adding glucose residue from UDPG to the growing chain of glycogen. This is Glycogen [starch] synthase (glcS) from Dictyostelium discoideum (Social amoeba).